Here is a 121-residue protein sequence, read N- to C-terminus: Basic phospholipase A2 F17 (121 aa).

Cystine bridges form between Cys25/Cys114, Cys27/Cys43, Cys42/Cys94, Cys48/Cys121, Cys49/Cys87, Cys56/Cys80, and Cys74/Cys85. Ca(2+)-binding residues include Tyr26, Gly28, and Gly30. Residue His46 is part of the active site. Asp47 is a Ca(2+) binding site. The active site involves Asp88.

This sequence belongs to the phospholipase A2 family. Group II subfamily. D49 sub-subfamily. In terms of assembly, when this protein is associated with crotapotin (F5 or F7), it forms the crotoxin protein. Requires Ca(2+) as cofactor. Expressed by the venom gland.

It is found in the secreted. It carries out the reaction a 1,2-diacyl-sn-glycero-3-phosphocholine + H2O = a 1-acyl-sn-glycero-3-phosphocholine + a fatty acid + H(+). Its activity is regulated as follows. Activated by heparin. Inhibited by its chaperone crotapotin. Its function is as follows. Snake venom phospholipase A2 (PLA2) that has anticoagulant activity and inhibits bactericial growth of the Gram-negative bacteria Xanthomonas axonopodis pv. passiflorae (in monomeric form). PLA2 catalyzes the calcium-dependent hydrolysis of the 2-acyl groups in 3-sn-phosphoglycerides. In Crotalus durissus terrificus (South American rattlesnake), this protein is Basic phospholipase A2 F17.